Consider the following 148-residue polypeptide: Thioredoxin H8 (148 aa).

The Thioredoxin domain occupies 1 to 145 (MGANVSTPDQ…LERKLNKYTQ (145 aa)). Catalysis depends on nucleophile residues cysteine 71 and cysteine 74. Cysteine 71 and cysteine 74 are disulfide-bonded.

This sequence belongs to the thioredoxin family. Plant H-type subfamily.

The protein resides in the cytoplasm. In terms of biological role, probable thiol-disulfide oxidoreductase that may be involved in the redox regulation of a number of cytosolic enzymes. In Arabidopsis thaliana (Mouse-ear cress), this protein is Thioredoxin H8 (TRX8).